The primary structure comprises 269 residues: Senescence-associated protein 13 (269 aa).

21–45 serves as a coordination point for NADP(+); sequence LVTGGSKGIGEAVVEELAMLGAKVH. Residue serine 154 participates in substrate binding. Tyrosine 167 acts as the Proton acceptor in catalysis.

Belongs to the short-chain dehydrogenases/reductases (SDR) family. SDR65C subfamily.

In terms of biological role, unspecific reductase providing both diastereomeric alcohols from the prochiral ketones. Active on cyclic monoterpenes and small flexible lipophilic carbonyls. No activity with tropinone, nitrogen-containing tropinone analogs, tropine or pseudotropine as substrate. The protein is Senescence-associated protein 13 of Arabidopsis thaliana (Mouse-ear cress).